The primary structure comprises 437 residues: Chromosomal replication initiator protein DnaA (437 aa).

Residues M1–V72 form a domain I, interacts with DnaA modulators region. A domain II region spans residues V72–S99. Positions G100–A320 are domain III, AAA+ region. ATP-binding residues include G144, G146, K147, and T148. The interval K321–I437 is domain IV, binds dsDNA.

This sequence belongs to the DnaA family. In terms of assembly, oligomerizes as a right-handed, spiral filament on DNA at oriC.

The protein resides in the cytoplasm. Plays an essential role in the initiation and regulation of chromosomal replication. ATP-DnaA binds to the origin of replication (oriC) to initiate formation of the DNA replication initiation complex once per cell cycle. Binds the DnaA box (a 9 base pair repeat at the origin) and separates the double-stranded (ds)DNA. Forms a right-handed helical filament on oriC DNA; dsDNA binds to the exterior of the filament while single-stranded (ss)DNA is stabiized in the filament's interior. The ATP-DnaA-oriC complex binds and stabilizes one strand of the AT-rich DNA unwinding element (DUE), permitting loading of DNA polymerase. After initiation quickly degrades to an ADP-DnaA complex that is not apt for DNA replication. Binds acidic phospholipids. This is Chromosomal replication initiator protein DnaA from Mycoplasma genitalium (strain ATCC 33530 / DSM 19775 / NCTC 10195 / G37) (Mycoplasmoides genitalium).